Consider the following 397-residue polypeptide: MEQTWRWYGPNDPVSLDDIRQAGATGVVTALHHIPNGVVWPVSEIKQRQAELAAKNLVWSVVESVPIHEDIKTHSGNYQQYIENYQQTLRNIAECGIDTVCYNFMPILDWTRTDLEYELPDGSKALRFDQIAFAAFELHILKRPGASNDYTAEEQVQAEAYFNAMTEADIAKLTGNIIAGLPGAEEGYTLDQFRVRLAEYDGIDKAQLRENMAYFLRAIIPVAEQVGLRMAVHPDDPPRPILGLPRIVSTIEDMQWLKETVDSIHNGFTMCTGSYGVRADNDLVKMIETFGDRIHFTHLRSTCREGNPKTFHEGGHLQGDVDMYSVVKAILTEEQRRQSLGDMRPIPMRPDHGHQMLDDLHKKTNPGYSAIGRLKGLAEVRGVELALKRTFFPELKQ.

Belongs to the mannonate dehydratase family. It depends on Fe(2+) as a cofactor. Mn(2+) serves as cofactor.

The enzyme catalyses D-mannonate = 2-dehydro-3-deoxy-D-gluconate + H2O. The protein operates within carbohydrate metabolism; pentose and glucuronate interconversion. Its function is as follows. Catalyzes the dehydration of D-mannonate. The sequence is that of Mannonate dehydratase from Yersinia pestis bv. Antiqua (strain Antiqua).